We begin with the raw amino-acid sequence, 67 residues long: Large ribosomal subunit protein uL29 (67 aa).

This sequence belongs to the universal ribosomal protein uL29 family.

The polypeptide is Large ribosomal subunit protein uL29 (Desulfitobacterium hafniense (strain DSM 10664 / DCB-2)).